The primary structure comprises 624 residues: Cell pattern formation-associated protein ust1 (624 aa).

Disordered stretches follow at residues 1–24 (MSTASPLHHGHGNGSYANSPAPTG) and 43–99 (RSGS…GHSS). Residues 43–62 (RSGSVPASASGSAPGSASGS) are compositionally biased toward low complexity. A compositionally biased stretch (basic residues) spans 70 to 85 (QHHTGHHHYSAHHTHS). The region spanning 233–339 (RVTTTLWEDE…PNIQSFLYHP (107 aa)) is the HTH APSES-type domain. The segment at residues 267 to 288 (GTKLLNVCGMSRGKRDGILKNE) is a DNA-binding region (H-T-H motif). Over residues 352–362 (AQERQAQRQRA) the composition is skewed to low complexity. Disordered regions lie at residues 352–456 (AQER…QQQQ), 474–504 (QQAYPMTAAQQLARPSVGDRRQSAPISLNNS), and 538–624 (SWND…IHHE). Residues 369–391 (PGANGTSQAPPLMRANTTPSNGD) show a composition bias toward polar residues. The span at 392 to 426 (TSTFSSGLSSLGSWTGSHDQGHASAPTTAQPSPSS) shows a compositional bias: low complexity. Polar residues predominate over residues 427–451 (MHNGATQMHMSLSNHGTASPTYAQS). Over residues 571-587 (LDGDDLHSPDSSDDRLA) the composition is skewed to basic and acidic residues. Positions 615–624 (VGNGSGIHHE) are enriched in gly residues.

Belongs to the EFG1/PHD1/stuA family. In terms of processing, phosphorylated but is not a target of cAMP signaling.

The protein localises to the nucleus. Functionally, transcription factor that regulates asexual reproduction. Binds the StuA-response elements (StRE) with the consensus sequence 5'-(A/T)CGCG(T/A)N(A/C)-3' at the promoters of target genes. Regulates dimorphism, virulence, and the sporulation program. Required for mating, gall induction, and sporogenesis in maize tissue. Regulates expression of the filament-down-regulated gene UM00205 and the teliospore-specific gene ssp1. This is Cell pattern formation-associated protein ust1 (ust1) from Mycosarcoma maydis (Corn smut fungus).